The primary structure comprises 1042 residues: SWI/SNF-related matrix-associated actin-dependent regulator of chromatin subfamily A member 1 (1042 aa).

The tract at residues 25 to 82 (EDEQPGPSTSQEEGAAAAATEATAATEKGEKKKEKNVSSFQLKLAAKAPKSEKEMDPE) is disordered. Residues 36–50 (EEGAAAAATEATAAT) are compositionally biased toward low complexity. 2 stretches are compositionally biased toward basic and acidic residues: residues 51–60 (EKGEKKKEKN) and 73–82 (PKSEKEMDPE). Phosphoserine occurs at positions 116 and 119. In terms of domain architecture, Helicase ATP-binding spans 195 to 360 (ISLYENGVNG…WALLNFLLPD (166 aa)). 208–215 (DEMGLGKT) is an ATP binding site. A DEAH box motif is present at residues 311 to 314 (DEAH). The 152-residue stretch at 490-641 (VLDKLLAKLK…SIVIQQGRLI (152 aa)) folds into the Helicase C-terminal domain. Residues Lys650, Lys716, and Lys738 each participate in a glycyl lysine isopeptide (Lys-Gly) (interchain with G-Cter in SUMO2) cross-link. Residues 819–849 (EQKKIDGAEPLTPEETEEKEKLLTQGFTNWT) form a disordered region. Basic and acidic residues predominate over residues 828-837 (PLTPEETEEK). Positions 843 to 895 (QGFTNWTKRDFNQFIKANEKYGRDDIDNIAREVEGKSPEEVMEYSAVFWERCN) constitute an SANT 1 domain. A Phosphotyrosine modification is found at Tyr942. The 65-residue stretch at 946-1010 (KGKNYTEEED…QRRCNTLISL (65 aa)) folds into the SANT 2 domain.

Belongs to the SNF2/RAD54 helicase family. ISWI subfamily. In terms of assembly, may form homodimers. Component of the ACF-1 ISWI chromatin remodeling complex at least composed of SMARCA1 and BAZ1A, which regulates the spacing of histone octamers on the DNA template to facilitate access to DNA. Within the complex interacts with BAZ1A; the interaction is direct. Component of the WICH-1 ISWI chromatin remodeling complex at least composed of SMARCA1 and BAZ1B/WSTF. Within the complex interacts with BAZ1B/WSTF. Component of the NoRC-1 ISWI chromatin remodeling complex at least composed of SMARCA1 and BAZ2A/TIP5. Within the complex interacts with BAZ2A/TIP5. Component of the BRF-1 ISWI chromatin remodeling complex at least composed of SMARCA1 and BAZ2B. Within the complex interacts with BAZ2B. Component of the NURF-1 ISWI chromatin remodeling complex (also called the nucleosome-remodeling factor (NURF) complex) at least composed of SMARCA1, BPTF, RBBP4 and RBBP7. Within the complex interacts with BPTF. Within the complex interacts with RBBP4 and RBBP7. Component of the CERF-1 ISWI chromatin remodeling complex (also called the CECR2-containing-remodeling factor (CERF) complex) at least composed of CECR2 and SMARCA1. LUZP1 is detected as part of the CERF-1 complex in embryonic stem cells where it is involved in complex stabilization but is not detected in the complex in the testis. Component of the RSF-1 ISWI chromatin remodeling complex at least composed of SMARCA1 and RSF1. Within the complex interacts with RSF1. Interacts with PRLR. Interacts with ERCC6. As to quaternary structure, may form homodimers. Component of the BPFT-SMARCA1 complex at least composed of SMARCA1, BPFT, RBBP4 and RBBP7; the complex is catalytically inactive and does not remodel chromatin. Within the complex interacts with BPTF, RBBP4 and RBBP7. Component of the BAZ1A-1-SMARCA1 complex at least composed of SMARCA1 and BAZ1A; the complex is catalytically inactive and does not remodel chromatin. Component of the BAZ1B-1-SMARCA1 complex at least composed of SMARCA1 and BAZ1B; the complex is catalytically inactive and does not remodel chromatin. In terms of tissue distribution, expressed in lung, breast, kidney, ovary, skeletal muscle and brain. Mainly expressed in non-neuronal tissues such as lung, breast, kidney, and ovary.

The protein resides in the nucleus. Its subcellular location is the chromosome. The catalysed reaction is ATP + H2O = ADP + phosphate + H(+). Functionally, ATPase that possesses intrinsic ATP-dependent chromatin-remodeling activity. ATPase activity is substrate-dependent, and is increased when nucleosomes are the substrate, but is also catalytically active when DNA alone is the substrate. Catalytic subunit of ISWI chromatin-remodeling complexes, which form ordered nucleosome arrays on chromatin and facilitate access to DNA during DNA-templated processes such as DNA replication, transcription, and repair. Within the ISWI chromatin-remodeling complexes, slides edge- and center-positioned histone octamers away from their original location on the DNA template. Catalytic activity and histone octamer sliding propensity is regulated and determined by components of the ISWI chromatin-remodeling complexes. The BAZ1A-, BAZ1B-, BAZ2A- and BAZ2B-containing ISWI chromatin-remodeling complexes regulate the spacing of nucleosomes along the chromatin and have the ability to slide mononucleosomes to the center of a DNA template. The CECR2- and RSF1-containing ISWI chromatin-remodeling complexes do not have the ability to slide mononucleosomes to the center of a DNA template. Within the NURF-1 and CERF-1 ISWI chromatin remodeling complexes, nucleosomes are the preferred substrate for its ATPase activity. Within the NURF-1 ISWI chromatin-remodeling complex, binds to the promoters of En1 and En2 to positively regulate their expression and promote brain development. May promote neurite outgrowth. May be involved in the development of luteal cells. Facilitates nucleosome assembly during DNA replication, ensuring replication fork progression and genomic stability by preventing replication stress and nascent DNA gaps. In terms of biological role, catalytically inactive when either DNA or nucleosomes are the substrate and does not possess chromatin-remodeling activity. Acts as a negative regulator of chromatin remodelers by generating inactive complexes. In Homo sapiens (Human), this protein is SWI/SNF-related matrix-associated actin-dependent regulator of chromatin subfamily A member 1.